The following is an 89-amino-acid chain: Small ribosomal subunit protein uS15 (89 aa).

It belongs to the universal ribosomal protein uS15 family. Part of the 30S ribosomal subunit. Forms a bridge to the 50S subunit in the 70S ribosome, contacting the 23S rRNA.

One of the primary rRNA binding proteins, it binds directly to 16S rRNA where it helps nucleate assembly of the platform of the 30S subunit by binding and bridging several RNA helices of the 16S rRNA. Functionally, forms an intersubunit bridge (bridge B4) with the 23S rRNA of the 50S subunit in the ribosome. This is Small ribosomal subunit protein uS15 from Azobacteroides pseudotrichonymphae genomovar. CFP2.